A 430-amino-acid chain; its full sequence is Trigger factor (430 aa).

The PPIase FKBP-type domain maps to 157–242 (GDLVALETWS…AVEVSEPVLP (86 aa)).

The protein belongs to the FKBP-type PPIase family. Tig subfamily.

The protein localises to the cytoplasm. It catalyses the reaction [protein]-peptidylproline (omega=180) = [protein]-peptidylproline (omega=0). In terms of biological role, involved in protein export. Acts as a chaperone by maintaining the newly synthesized protein in an open conformation. Functions as a peptidyl-prolyl cis-trans isomerase. The sequence is that of Trigger factor from Xanthomonas oryzae pv. oryzae (strain MAFF 311018).